We begin with the raw amino-acid sequence, 225 residues long: UPF0758 protein MADE_1000235 (225 aa).

One can recognise an MPN domain in the interval 102-224; sequence VFNNVDDTKR…TISFAQRGLL (123 aa). The Zn(2+) site is built by His173, His175, and Asp186. Positions 173–186 match the JAMM motif motif; that stretch reads HNHPSGVAEPSHAD.

The protein belongs to the UPF0758 family.

The protein is UPF0758 protein MADE_1000235 of Alteromonas mediterranea (strain DSM 17117 / CIP 110805 / LMG 28347 / Deep ecotype).